Reading from the N-terminus, the 65-residue chain is Large ribosomal subunit protein uL29 (65 aa).

This sequence belongs to the universal ribosomal protein uL29 family.

The sequence is that of Large ribosomal subunit protein uL29 from Natranaerobius thermophilus (strain ATCC BAA-1301 / DSM 18059 / JW/NM-WN-LF).